The chain runs to 476 residues: Tryptophan--tRNA ligase, cytoplasmic (476 aa).

The tract at residues 1–117 is dispensable to the catalytic activity; it reads MADMSNGEQG…LIVRFGSSKI (117 aa). Residues 13-69 enclose the WHEP-TRS domain; sequence SPLELFHSIAAQGELVRDLKARNAAKDEIDSAVKMLLSLKTSYKAATGEDYKVDCPP. Residues 63 to 83 are disordered; it reads YKVDCPPGDPAPESGEGLDAT. K159 carries the post-translational modification N6-succinyllysine. Positions 169-178 match the 'HIGH' region motif; sequence PSSEAMHVGH. Positions 354 to 358 match the 'KMSKS' region motif; that stretch reads KMSAS. S356 bears the Phosphoserine mark.

Belongs to the class-I aminoacyl-tRNA synthetase family. Homodimer. Interacts with oxidized form of GAPDH. In terms of processing, proteolytic cleavage generates 2 forms; T1-TrpRS and T2-TrpRS.

Its subcellular location is the cytoplasm. The catalysed reaction is tRNA(Trp) + L-tryptophan + ATP = L-tryptophyl-tRNA(Trp) + AMP + diphosphate + H(+). Its function is as follows. T1-TrpRS has aminoacylation activity while T2-TrpRS lacks it. T1-TrpRS and T2-TrpRS possess angiostatic activity. T2-TrpRS inhibits fluid shear stress-activated responses of endothelial cells. Regulates ERK, Akt, and eNOS activation pathways that are associated with angiogenesis, cytoskeletal reorganization and shear stress-responsive gene expression. This is Tryptophan--tRNA ligase, cytoplasmic (WARS1) from Bos taurus (Bovine).